A 623-amino-acid chain; its full sequence is Glutamine--fructose-6-phosphate aminotransferase [isomerizing] (623 aa).

Cysteine 2 functions as the Nucleophile; for GATase activity in the catalytic mechanism. Residues 2-228 (CGIVGYIGQA…NDQVVTITAD (227 aa)) enclose the Glutamine amidotransferase type-2 domain. 2 SIS domains span residues 295-435 (IDEA…LRGN) and 468-613 (LGQD…VDQP). The For Fru-6P isomerization activity role is filled by lysine 618.

As to quaternary structure, homodimer.

It localises to the cytoplasm. The catalysed reaction is D-fructose 6-phosphate + L-glutamine = D-glucosamine 6-phosphate + L-glutamate. Catalyzes the first step in hexosamine metabolism, converting fructose-6P into glucosamine-6P using glutamine as a nitrogen source. The sequence is that of Glutamine--fructose-6-phosphate aminotransferase [isomerizing] from Corynebacterium glutamicum (strain ATCC 13032 / DSM 20300 / JCM 1318 / BCRC 11384 / CCUG 27702 / LMG 3730 / NBRC 12168 / NCIMB 10025 / NRRL B-2784 / 534).